A 562-amino-acid polypeptide reads, in one-letter code: Bacillolysin (562 aa).

The signal sequence occupies residues 1-24 (MKKKKQALKVLLSVGILSSSFAFA). A propeptide spans 25–245 (HTSSAAPNNV…KQAAKPAAKP (221 aa)) (activation peptide). Ca(2+) contacts are provided by Asp303, Asp305, and Asp384. His388 provides a ligand contact to Zn(2+). Glu389 is a catalytic residue. Residues His392 and Glu412 each contribute to the Zn(2+) site. Residues Glu423, Asn429, Asp431, Glu433, Glu436, Tyr439, Thr440, and Asp446 each coordinate Ca(2+). The Proton donor role is filled by His477.

It belongs to the peptidase M4 family. Ca(2+) serves as cofactor. It depends on Zn(2+) as a cofactor.

The protein localises to the secreted. The enzyme catalyses Similar, but not identical, to that of thermolysin.. Functionally, extracellular zinc metalloprotease. The polypeptide is Bacillolysin (Priestia megaterium (strain ATCC 14581 / DSM 32 / CCUG 1817 / JCM 2506 / NBRC 15308 / NCIMB 9376 / NCTC 10342 / NRRL B-14308 / VKM B-512 / Ford 19) (Bacillus megaterium)).